The following is a 451-amino-acid chain: Eukaryotic translation initiation factor 3 subunit E (451 aa).

The PCI domain maps to 256–425 (TDLFFSPAYI…GTVIMNHPPQ (170 aa)).

Belongs to the eIF-3 subunit E family. Component of the eukaryotic translation initiation factor 3 (eIF-3) complex.

Its subcellular location is the cytoplasm. Functionally, component of the eukaryotic translation initiation factor 3 (eIF-3) complex, which is involved in protein synthesis of a specialized repertoire of mRNAs and, together with other initiation factors, stimulates binding of mRNA and methionyl-tRNAi to the 40S ribosome. The eIF-3 complex specifically targets and initiates translation of a subset of mRNAs involved in cell proliferation. The protein is Eukaryotic translation initiation factor 3 subunit E (int6) of Aspergillus fumigatus (strain CBS 144.89 / FGSC A1163 / CEA10) (Neosartorya fumigata).